We begin with the raw amino-acid sequence, 257 residues long: UPF0246 protein RHOS4_29700 (257 aa).

It belongs to the UPF0246 family.

This chain is UPF0246 protein RHOS4_29700, found in Cereibacter sphaeroides (strain ATCC 17023 / DSM 158 / JCM 6121 / CCUG 31486 / LMG 2827 / NBRC 12203 / NCIMB 8253 / ATH 2.4.1.) (Rhodobacter sphaeroides).